A 102-amino-acid polypeptide reads, in one-letter code: Protein PDF (102 aa).

Residues 1–24 (MARYTYLVALVLLAICCQWGYCGA) form the signal peptide. An Alanine amide modification is found at A100.

The protein belongs to the arthropod PDH family. Predominantly expressed in adult head. Expressed at higher level in males than in females. In adult brain, it is specifically expressed in the ventral lateral neurons (LNvs) as well as in 2-4 tritocerebral cells and 4-6 abdominal cells.

Its subcellular location is the secreted. Its function is as follows. Neuropeptide PDF is the main transmitter regulating circadian locomotor rhythms. Required to maintain behavioral rhythms under constant conditions by coordinating pacemaker interactions in the circadian system. Together with CCHa1, involved in regulating intensity and periodicity of daytime activity, possibly by modulating rhythmic expression of circadian protein PER/period in a subset of clock neurons, but not TIM/timeless. Acts on small and large ventral lateral neurons to control sleep and regulates the state transition from sleep to wake. The chain is Protein PDF (Pdf) from Drosophila melanogaster (Fruit fly).